Here is a 352-residue protein sequence, read N- to C-terminus: Cell division protein ZipA (352 aa).

At 1–6 (MKDLQL) the chain is on the periplasmic side. A helical transmembrane segment spans residues 7-27 (VLFVLGAIAIIAVLVHGFWSI). Over 28–352 (RKQQPKSMKQ…KDYLRRLNAA (325 aa)) the chain is Cytoplasmic. 2 disordered regions span residues 78 to 120 (KPVL…HVEP) and 138 to 160 (PAPT…TSTA). Over residues 83–105 (TNLSQKPHSGTTKLTDTPLQDSL) the composition is skewed to polar residues. Residues 111-120 (HKTEPEHVEP) show a composition bias toward basic and acidic residues. Residues 141–160 (TASTSMNTPKKIFNPSTSTA) show a composition bias toward polar residues.

The protein belongs to the ZipA family. In terms of assembly, interacts with FtsZ via their C-terminal domains.

The protein localises to the cell inner membrane. Its function is as follows. Essential cell division protein that stabilizes the FtsZ protofilaments by cross-linking them and that serves as a cytoplasmic membrane anchor for the Z ring. Also required for the recruitment to the septal ring of downstream cell division proteins. This Shewanella frigidimarina (strain NCIMB 400) protein is Cell division protein ZipA.